The following is a 146-amino-acid chain: Large ribosomal subunit protein uL15 (146 aa).

Over residues 1-13 (MKLHELKAAEGSR) the composition is skewed to basic and acidic residues. Residues 1-51 (MKLHELKAAEGSRKVRNRVGRGTSSGNGKTSGRGQKGQKARSGGGVRLGFE) are disordered. Composition is skewed to gly residues over residues 23–35 (TSSG…GRGQ) and 42–51 (SGGGVRLGFE).

The protein belongs to the universal ribosomal protein uL15 family. Part of the 50S ribosomal subunit.

Its function is as follows. Binds to the 23S rRNA. The sequence is that of Large ribosomal subunit protein uL15 from Streptococcus pyogenes serotype M1.